We begin with the raw amino-acid sequence, 227 residues long: Brain acid soluble protein 1 (227 aa).

Over residues 1 to 11 (MGGKLSKKKKG) the composition is skewed to basic residues. The disordered stretch occupies residues 1–227 (MGGKLSKKKK…NSDQTVTVKE (227 aa)). Gly2 is lipidated: N-myristoyl glycine. Residues 15 to 27 (NDEKAKEKDKKAE) are compositionally biased toward basic and acidic residues. Lys25 is covalently cross-linked (Glycyl lysine isopeptide (Lys-Gly) (interchain with G-Cter in SUMO2)). 2 positions are modified to phosphothreonine: Thr31 and Thr36. Ser40 is subject to Phosphoserine. Over residues 49 to 105 (AEAKEGKEKPDQDAEGKAEEKEGEKDAAAAKEEAPKAEPEKTEGAAEAKAEPPKAPE) the composition is skewed to basic and acidic residues. Residues Lys84 and Lys97 each participate in a glycyl lysine isopeptide (Lys-Gly) (interchain with G-Cter in SUMO2) cross-link. Positions 106–139 (QEQAAPGPAAGGEAPKAAEAAAAPAESAAPAAGE) are enriched in low complexity. Positions 140-152 (EPSKEEGEPKKTE) are enriched in basic and acidic residues. Lys163 participates in a covalent cross-link: Glycyl lysine isopeptide (Lys-Gly) (interchain with G-Cter in SUMO2). A phosphoserine mark is found at Ser164, Ser170, Ser172, Ser176, and Ser195. Over residues 173–185 (KPGSSEAAPSSKE) the composition is skewed to polar residues. Thr196 is subject to Phosphothreonine. Residues Ser205 and Ser219 each carry the phosphoserine modification. A compositionally biased stretch (polar residues) spans 218–227 (NSDQTVTVKE).

As to expression, brain.

Its subcellular location is the cell membrane. The protein resides in the cell projection. The protein localises to the growth cone. This chain is Brain acid soluble protein 1 (BASP1), found in Homo sapiens (Human).